Reading from the N-terminus, the 1054-residue chain is FERM, ARHGEF and pleckstrin domain-containing protein 2 (1054 aa).

The region spanning 44-324 is the FERM domain; sequence LHLRVKLLDN…EYHTFFRLLD (281 aa). Phosphoserine occurs at positions 389 and 439. The tract at residues 421–527 is disordered; sequence EFKDSSSSLT…GAGMDCEEPR (107 aa). Low complexity predominate over residues 468-492; sequence PGPGLSTKSPQPSPSSRKSPLSLSP. Residues 535–726 enclose the DH domain; that stretch reads EAYFIVKEIL…TEVTTTLQHI (192 aa). Residues 755–852 form the PH 1 domain; that stretch reads EFIREGCLHK…WMLDLNSAIQ (98 aa). The disordered stretch occupies residues 856-894; sequence SGGDTAPALPGRTVCTRPPRSPNEVSLEQESEDDARGVR. The PH 2 domain maps to 929-1026; the sequence is ENQLSGYLLR…WMEVIQGASS (98 aa). The segment at 1029-1054 is disordered; the sequence is GRAPSIVQDGPQPSSGLEGMVRGKEE.

In terms of assembly, interacts with PLXNA1. Interaction with PLXNA1 or PIP5K1C lowers its guanine nucleotide exchange activity. Dissociates from PLXNA1 when SEMA3A binds to the receptor. Interacts with PIP5K1C via its FERM domain. The interaction with PIP5K1C is enhanced by SEMA3A binding. Interacts with RAC1.

Its function is as follows. Functions as a guanine nucleotide exchange factor that activates RAC1. May have relatively low activity. Plays a role in the response to class 3 semaphorins and remodeling of the actin cytoskeleton. Plays a role in TNFSF11-mediated osteoclast differentiation, especially in podosome rearrangement and reorganization of the actin cytoskeleton. Regulates the activation of ITGB3, integrin signaling and cell adhesion. This chain is FERM, ARHGEF and pleckstrin domain-containing protein 2 (FARP2), found in Homo sapiens (Human).